Reading from the N-terminus, the 538-residue chain is Bifunctional purine biosynthesis protein PurH (538 aa).

The MGS-like domain occupies 6–158; the sequence is KHIPAPDLHR…KNHAYVATVV (153 aa).

Belongs to the PurH family.

The catalysed reaction is (6R)-10-formyltetrahydrofolate + 5-amino-1-(5-phospho-beta-D-ribosyl)imidazole-4-carboxamide = 5-formamido-1-(5-phospho-D-ribosyl)imidazole-4-carboxamide + (6S)-5,6,7,8-tetrahydrofolate. It carries out the reaction IMP + H2O = 5-formamido-1-(5-phospho-D-ribosyl)imidazole-4-carboxamide. Its pathway is purine metabolism; IMP biosynthesis via de novo pathway; 5-formamido-1-(5-phospho-D-ribosyl)imidazole-4-carboxamide from 5-amino-1-(5-phospho-D-ribosyl)imidazole-4-carboxamide (10-formyl THF route): step 1/1. It functions in the pathway purine metabolism; IMP biosynthesis via de novo pathway; IMP from 5-formamido-1-(5-phospho-D-ribosyl)imidazole-4-carboxamide: step 1/1. The polypeptide is Bifunctional purine biosynthesis protein PurH (Brucella melitensis biotype 2 (strain ATCC 23457)).